The sequence spans 106 residues: Large ribosomal subunit protein eL42 (106 aa).

Belongs to the eukaryotic ribosomal protein eL42 family.

In Kluyveromyces lactis (strain ATCC 8585 / CBS 2359 / DSM 70799 / NBRC 1267 / NRRL Y-1140 / WM37) (Yeast), this protein is Large ribosomal subunit protein eL42 (RPL44).